A 254-amino-acid polypeptide reads, in one-letter code: MQRPGEPGAARFGPPEGCADHRPHRYRSFMIEEILTEPPGPKGAAPAAAAAAAGELLKFGVQALLAARPFHSHLAVLKAEQAAVFKFPLAPLGCSGLSSALLAAGPGLPGAAGAPHLPLELQLRGKLEAAGPGEPGTKAKKGRRSRTVFTELQLMGLEKRFEKQKYLSTPDRIDLAESLGLSQLQVKTWYQNRRMKWKKIVLQGGGLESPTKPKGRPKKNSIPTSEQLTEQERAKDAEKPAEVPGEPSDRSRED.

The segment at 1–20 (MQRPGEPGAARFGPPEGCAD) is disordered. The homeobox DNA-binding region spans 142–201 (GRRSRTVFTELQLMGLEKRFEKQKYLSTPDRIDLAESLGLSQLQVKTWYQNRRMKWKKIV). Residues 204–254 (GGGLESPTKPKGRPKKNSIPTSEQLTEQERAKDAEKPAEVPGEPSDRSRED) form a disordered region. The segment covering 230-254 (EQERAKDAEKPAEVPGEPSDRSRED) has biased composition (basic and acidic residues).

Belongs to the BAR homeobox family. As to expression, widely expressed. Expressed at higher levels in testis and heart. Detected in craniofacial tissue and adult iris, but not in lymphocytes, fibroblasts, choroid retina, retinal pigment epithelium, kidney, or fetal liver.

The protein resides in the nucleus. Functionally, transcription factor, which is involved in craniofacial development, in odontogenesis and in stomach organogenesis. May have a role in the differentiation of molars from incisors. Plays a role in suppressing endodermal Wnt activity. Binds to a regulatory module of the NCAM promoter. This is Homeobox protein BarH-like 1 (BARX1) from Homo sapiens (Human).